The primary structure comprises 435 residues: Probable E3 ubiquitin-protein ligase makorin-1 (435 aa).

C3H1-type zinc fingers lie at residues 18–45 (WTKH…HDLT) and 48–75 (KPAA…HCKP). The disordered stretch occupies residues 81–109 (LPAPQMLPLPSASLAGPSDPEPSGPTPVP). Positions 99–108 (DPEPSGPTPV) are enriched in pro residues. The segment at 155–182 (QLRKQLCPYAAVGECRYGINCAYLHGDV) adopts a C3H1-type 3 zinc-finger fold. Positions 183–210 (CYMCGLQVLHPTDNNQRSEHTKACIEAH) are makorin-type Cys-His. The RING-type zinc-finger motif lies at 228 to 282 (CGVCMEVVFEKANPSERRFGILSNCSHCYCLKCIRKWRSAKQFESKIIKSCPECR). A C3H1-type 4 zinc finger spans residues 311–340 (GMGSKPCRYFDEGRGTCPFGSNCFYKHAFP). The segment at 345 to 369 (EEAQPQRRQTGSNSRNRNSRRTPLW) is disordered.

Weakly expressed in adult brain, heart and kidney.

It carries out the reaction S-ubiquitinyl-[E2 ubiquitin-conjugating enzyme]-L-cysteine + [acceptor protein]-L-lysine = [E2 ubiquitin-conjugating enzyme]-L-cysteine + N(6)-ubiquitinyl-[acceptor protein]-L-lysine.. Its pathway is protein modification; protein ubiquitination. Its function is as follows. E3 ubiquitin ligase catalyzing the covalent attachment of ubiquitin moieties onto substrate proteins. In Seriola quinqueradiata (Five-ray yellowtail), this protein is Probable E3 ubiquitin-protein ligase makorin-1.